Reading from the N-terminus, the 485-residue chain is Glutamyl-tRNA(Gln) amidotransferase subunit A (485 aa).

Active-site charge relay system residues include Lys79 and Ser154. The Acyl-ester intermediate role is filled by Ser178.

It belongs to the amidase family. GatA subfamily. Heterotrimer of A, B and C subunits.

It catalyses the reaction L-glutamyl-tRNA(Gln) + L-glutamine + ATP + H2O = L-glutaminyl-tRNA(Gln) + L-glutamate + ADP + phosphate + H(+). Allows the formation of correctly charged Gln-tRNA(Gln) through the transamidation of misacylated Glu-tRNA(Gln) in organisms which lack glutaminyl-tRNA synthetase. The reaction takes place in the presence of glutamine and ATP through an activated gamma-phospho-Glu-tRNA(Gln). The chain is Glutamyl-tRNA(Gln) amidotransferase subunit A from Geobacillus thermodenitrificans (strain NG80-2).